The sequence spans 432 residues: Enolase 1 (432 aa).

Residue Gln-163 participates in (2R)-2-phosphoglycerate binding. The Proton donor role is filled by Glu-205. Mg(2+)-binding residues include Asp-242, Glu-287, and Asp-314. Residues Lys-339, Arg-368, Ser-369, and Lys-390 each coordinate (2R)-2-phosphoglycerate. Lys-339 functions as the Proton acceptor in the catalytic mechanism.

It belongs to the enolase family. Mg(2+) is required as a cofactor.

The protein localises to the cytoplasm. It localises to the secreted. It is found in the cell surface. It catalyses the reaction (2R)-2-phosphoglycerate = phosphoenolpyruvate + H2O. Its pathway is carbohydrate degradation; glycolysis; pyruvate from D-glyceraldehyde 3-phosphate: step 4/5. Its function is as follows. Catalyzes the reversible conversion of 2-phosphoglycerate (2-PG) into phosphoenolpyruvate (PEP). It is essential for the degradation of carbohydrates via glycolysis. This Lactobacillus johnsonii (strain CNCM I-12250 / La1 / NCC 533) protein is Enolase 1.